Reading from the N-terminus, the 61-residue chain is Large ribosomal subunit protein uL30 (61 aa).

The protein belongs to the universal ribosomal protein uL30 family. In terms of assembly, part of the 50S ribosomal subunit.

This Oenococcus oeni (strain ATCC BAA-331 / PSU-1) protein is Large ribosomal subunit protein uL30.